The following is a 1253-amino-acid chain: Cytoplasmic FMR1-interacting protein 1 (1253 aa).

Ser583 is subject to Phosphoserine. At Thr1234 the chain carries Phosphothreonine.

Belongs to the CYFIP family. Component of the WAVE1 complex composed of ABI2, CYFIP1 or CYFIP2, BRK1, NCKAP1 and WASF1/WAVE1. Within the complex, a heterodimer containing NCKAP1 and CYFIP1 interacts with a heterotrimer formed by WAVE1, ABI2 and BRK1. Component of the CYFIP1-EIF4E-FMR1 complex which is composed of CYFIP, EIF4E and FMR1. Interacts with FMR1 but does not bind to related proteins FXR1 or FXR2. Interaction with EIF4E stimulates FMR1 binding. Component of the WAVE2 complex composed of ABI1, CYFIP1/SRA1, NCKAP1/NAP1 (NCKAP1l/HEM1 in hematopoietic cells) and WASF2/WAVE2. Interacts with the active GTP-bound form of RAC1. Interacts through its C-terminus with the C-terminus of DPYSL2/CRMP2 which is necessary for DPYSL2-induced axon outgrowth. Interacts with NYAP1, NYAP2 and MYO16. Interacts with TMEM108 (via N-terminus); the interaction associates TMEM108 with the WAVE1 complex.

Its subcellular location is the cytoplasm. It localises to the perinuclear region. The protein resides in the cell projection. The protein localises to the lamellipodium. It is found in the ruffle. Its subcellular location is the synapse. It localises to the synaptosome. Component of the CYFIP1-EIF4E-FMR1 complex which binds to the mRNA cap and mediates translational repression. In the CYFIP1-EIF4E-FMR1 complex this subunit is an adapter between EIF4E and FMR1. Promotes the translation repression activity of FMR1 in brain probably by mediating its association with EIF4E and mRNA. Regulates formation of membrane ruffles and lamellipodia. Plays a role in axon outgrowth. Binds to F-actin but not to RNA. Part of the WAVE complex that regulates actin filament reorganization via its interaction with the Arp2/3 complex. Actin remodeling activity is regulated by RAC1. Regulator of epithelial morphogenesis. As component of the WAVE1 complex, required for BDNF-NTRK2 endocytic trafficking and signaling from early endosomes. May act as an invasion suppressor in cancers. This chain is Cytoplasmic FMR1-interacting protein 1, found in Homo sapiens (Human).